The primary structure comprises 294 residues: Mitochondrial substrate carrier family protein ucpB (294 aa).

Residues M1–K10 lie on the Mitochondrial intermembrane side of the membrane. 3 Solcar repeats span residues I9–Y93, T101–M187, and D197–V288. A helical transmembrane segment spans residues F11–L31. Residues K32 to K67 are Mitochondrial matrix-facing. A helical transmembrane segment spans residues G68 to D88. Topologically, residues V89–K106 are mitochondrial intermembrane. Residues V107–I127 traverse the membrane as a helical segment. Residues K128–K161 are Mitochondrial matrix-facing. The helical transmembrane segment at G162 to D182 threads the bilayer. Residues H183–G192 lie on the Mitochondrial intermembrane side of the membrane. A helical transmembrane segment spans residues I193–A213. Topologically, residues S214 to N267 are mitochondrial matrix. Residues W268–L285 form a helical membrane-spanning segment. At R286–I294 the chain is on the mitochondrial intermembrane side.

Belongs to the mitochondrial carrier (TC 2.A.29) family.

It is found in the mitochondrion inner membrane. Mitochondrial solute carriers shuttle metabolites, nucleotides, and cofactors through the mitochondrial inner membrane. The protein is Mitochondrial substrate carrier family protein ucpB (ucpB) of Dictyostelium discoideum (Social amoeba).